Here is a 115-residue protein sequence, read N- to C-terminus: Large ribosomal subunit protein eL36 (115 aa).

This sequence belongs to the eukaryotic ribosomal protein eL36 family. In terms of assembly, component of the large ribosomal subunit.

The protein localises to the cytoplasm. It is found in the cytosol. Its function is as follows. Component of the large ribosomal subunit. The polypeptide is Large ribosomal subunit protein eL36 (RpL36) (Drosophila melanogaster (Fruit fly)).